Reading from the N-terminus, the 772-residue chain is Polyribonucleotide nucleotidyltransferase (772 aa).

Mg(2+) is bound by residues Asp-488 and Asp-494. The 60-residue stretch at 555–614 (PRLTTLKINPEKIRDVIGKGGAVIRGLQEETGTTINIDEDGTITIASTDPEKAEFAKKRI) folds into the KH domain. An S1 motif domain is found at 624 to 692 (GKVYEGPVTK…EKGRVKLSMK (69 aa)). Positions 690 to 772 (SMKALTERPA…QPYAPRDSQE (83 aa)) are disordered. Residues 703–740 (YSERPPREDRGDRGDRGGERRERSDRGDRGGDRGERAP) show a composition bias toward basic and acidic residues. Residues 743–757 (NSEQQQQPRSNEQQP) show a composition bias toward low complexity.

Belongs to the polyribonucleotide nucleotidyltransferase family. Mg(2+) is required as a cofactor.

It is found in the cytoplasm. The enzyme catalyses RNA(n+1) + phosphate = RNA(n) + a ribonucleoside 5'-diphosphate. Functionally, involved in mRNA degradation. Catalyzes the phosphorolysis of single-stranded polyribonucleotides processively in the 3'- to 5'-direction. The protein is Polyribonucleotide nucleotidyltransferase of Variovorax paradoxus (strain S110).